The sequence spans 212 residues: Thymidylate kinase (212 aa).

10 to 17 (GPDGAGKS) is an ATP binding site.

This sequence belongs to the thymidylate kinase family.

It catalyses the reaction dTMP + ATP = dTDP + ADP. Its function is as follows. Phosphorylation of dTMP to form dTDP in both de novo and salvage pathways of dTTP synthesis. The chain is Thymidylate kinase from Lactobacillus helveticus (strain DPC 4571).